The following is a 301-amino-acid chain: MKIAVLSRNPRLYSTRRLVEAGIERGHEMVVIDTLRAYMNIASHKPQIHYRGKPLEGFDAVIPRIGASVTFYGCAVLRQFEMMGVFPLNESVAIARSRDKLRSLQLLSRRGIGLPVTGFAHSPDDIPDLIQMVNGAPLVIKVLEGTQGIGVVLCETATAAESVIEAFMGLKQDIMVQEYIKEAGGADIRCFVVGDKVIASMKRQAKPGEFRSNLHRGGSASLIKITPEERMTALRAAKVMGLSVAGVDILRSNHGPLVMEVNSSPGLEGIEVTTSKDVAGMIIEYLEKNSGPHMTRTKGKG.

Residues 104 to 287 form the ATP-grasp domain; sequence LQLLSRRGIG…VAGMIIEYLE (184 aa). ATP is bound by residues Lys141, 178–179, Asp187, and 211–213; these read EY and RSN. 3 residues coordinate Mg(2+): Asp248, Glu260, and Asn262. 3 residues coordinate Mn(2+): Asp248, Glu260, and Asn262.

It belongs to the RimK family. The cofactor is Mg(2+). Requires Mn(2+) as cofactor.

The sequence is that of Probable alpha-L-glutamate ligase from Pseudomonas savastanoi pv. phaseolicola (strain 1448A / Race 6) (Pseudomonas syringae pv. phaseolicola (strain 1448A / Race 6)).